The primary structure comprises 424 residues: Formyl-CoA:oxalate CoA-transferase (424 aa).

CoA-binding positions include Gln-17–Ser-18, Arg-38, Asn-96–Ala-98, Arg-104, and Lys-136–Glu-139. Residue Asp-168 is the Nucleophile of the active site. Residue Gly-247 to Gln-249 coordinates substrate.

It belongs to the CoA-transferase III family. Frc subfamily. As to quaternary structure, homodimer.

It carries out the reaction formyl-CoA + oxalate = oxalyl-CoA + formate. Its pathway is metabolic intermediate degradation; oxalate degradation; CO(2) and formate from oxalate: step 1/2. Functionally, involved in the catabolism of oxalate and in the adapatation to low pH via the induction of the oxalate-dependent acid tolerance response (ATR). Catalyzes the transfer of the CoA moiety from formyl-CoA to oxalate. The sequence is that of Formyl-CoA:oxalate CoA-transferase from Afipia carboxidovorans (strain ATCC 49405 / DSM 1227 / KCTC 32145 / OM5) (Oligotropha carboxidovorans).